The primary structure comprises 143 residues: Small ribosomal subunit protein uS12B (143 aa).

P62 is subject to 3,4-dihydroxyproline.

This sequence belongs to the universal ribosomal protein uS12 family. In terms of assembly, component of the small ribosomal subunit (SSU). Mature yeast ribosomes consist of a small (40S) and a large (60S) subunit. The 40S small subunit contains 1 molecule of ribosomal RNA (18S rRNA) and at least 33 different proteins. The large 60S subunit contains 3 rRNA molecules (25S, 5.8S and 5S rRNA) and at least 46 different proteins. Post-translationally, hydroxylation at Pro-62 affects translation termination efficiency.

It is found in the cytoplasm. Its subcellular location is the nucleus. The protein localises to the nucleolus. In terms of biological role, component of the ribosome, a large ribonucleoprotein complex responsible for the synthesis of proteins in the cell. The small ribosomal subunit (SSU) binds messenger RNAs (mRNAs) and translates the encoded message by selecting cognate aminoacyl-transfer RNA (tRNA) molecules. The large subunit (LSU) contains the ribosomal catalytic site termed the peptidyl transferase center (PTC), which catalyzes the formation of peptide bonds, thereby polymerizing the amino acids delivered by tRNAs into a polypeptide chain. The nascent polypeptides leave the ribosome through a tunnel in the LSU and interact with protein factors that function in enzymatic processing, targeting, and the membrane insertion of nascent chains at the exit of the ribosomal tunnel. The protein is Small ribosomal subunit protein uS12B (rps2302) of Schizosaccharomyces pombe (strain 972 / ATCC 24843) (Fission yeast).